Here is a 311-residue protein sequence, read N- to C-terminus: Cytochrome f (311 aa).

A signal peptide spans 1–27 (MRRHLSLVLGSLVIGLALLIAPGASWA). Tyr28, Cys48, Cys51, and His52 together coordinate heme. The chain crosses the membrane as a helical span at residues 277 to 297 (IYGLLAFFAAVAIAQIMLVLK).

It belongs to the cytochrome f family. In terms of assembly, the 4 large subunits of the cytochrome b6-f complex are cytochrome b6, subunit IV (17 kDa polypeptide, PetD), cytochrome f and the Rieske protein, while the 4 small subunits are PetG, PetL, PetM and PetN. The complex functions as a dimer. Heme is required as a cofactor.

The protein resides in the cellular thylakoid membrane. In terms of biological role, component of the cytochrome b6-f complex, which mediates electron transfer between photosystem II (PSII) and photosystem I (PSI), cyclic electron flow around PSI, and state transitions. The protein is Cytochrome f of Synechococcus sp. (strain CC9902).